A 290-amino-acid chain; its full sequence is Protease HtpX (290 aa).

The next 2 membrane-spanning stretches (helical) occupy residues 6 to 26 and 36 to 56; these read LFLV…NILF and ISGL…ISLL. Residue histidine 143 participates in Zn(2+) binding. Glutamate 144 is an active-site residue. Histidine 147 contributes to the Zn(2+) binding site. A run of 2 helical transmembrane segments spans residues 158 to 178 and 200 to 220; these read LIQG…AGVI and ITVF…VMWF. Glutamate 225 is a Zn(2+) binding site.

This sequence belongs to the peptidase M48B family. It depends on Zn(2+) as a cofactor.

The protein resides in the cell inner membrane. The polypeptide is Protease HtpX (Aeromonas salmonicida (strain A449)).